Here is a 432-residue protein sequence, read N- to C-terminus: ATP-dependent RNA helicase RhlB (432 aa).

The Q motif motif lies at 9-37 (QNFADLGLQPQVIDGLNAKGFIKCTPIQA). The Helicase ATP-binding domain occupies 40-219 (LPVLLAGQDI…FEHMQEPEHV (180 aa)). 53–60 (AQTGTGKT) lines the ATP pocket. The short motif at 165 to 168 (DEAD) is the DEAD box element. Residues 245–390 (ALLQTLIEEE…QSDYDASALL (146 aa)) form the Helicase C-terminal domain. Residues 396–432 (PLRLQRRPQQNRRNNNGQRQGGNRKHTRPRQPRNTQS) form a disordered region. Over residues 417-426 (GNRKHTRPRQ) the composition is skewed to basic residues.

The protein belongs to the DEAD box helicase family. RhlB subfamily. Component of the RNA degradosome, which is a multiprotein complex involved in RNA processing and mRNA degradation.

Its subcellular location is the cytoplasm. It catalyses the reaction ATP + H2O = ADP + phosphate + H(+). DEAD-box RNA helicase involved in RNA degradation. Has RNA-dependent ATPase activity and unwinds double-stranded RNA. The polypeptide is ATP-dependent RNA helicase RhlB (Aliivibrio fischeri (strain ATCC 700601 / ES114) (Vibrio fischeri)).